Here is a 259-residue protein sequence, read N- to C-terminus: Thiazole synthase (259 aa).

Residue K99 is the Schiff-base intermediate with DXP of the active site. 1-deoxy-D-xylulose 5-phosphate contacts are provided by residues G161, 187-188, and 209-210; these read AG and NT.

The protein belongs to the ThiG family. As to quaternary structure, homotetramer. Forms heterodimers with either ThiH or ThiS.

It is found in the cytoplasm. The catalysed reaction is [ThiS sulfur-carrier protein]-C-terminal-Gly-aminoethanethioate + 2-iminoacetate + 1-deoxy-D-xylulose 5-phosphate = [ThiS sulfur-carrier protein]-C-terminal Gly-Gly + 2-[(2R,5Z)-2-carboxy-4-methylthiazol-5(2H)-ylidene]ethyl phosphate + 2 H2O + H(+). Its pathway is cofactor biosynthesis; thiamine diphosphate biosynthesis. Catalyzes the rearrangement of 1-deoxy-D-xylulose 5-phosphate (DXP) to produce the thiazole phosphate moiety of thiamine. Sulfur is provided by the thiocarboxylate moiety of the carrier protein ThiS. In vitro, sulfur can be provided by H(2)S. The chain is Thiazole synthase from Sulfurimonas denitrificans (strain ATCC 33889 / DSM 1251) (Thiomicrospira denitrificans (strain ATCC 33889 / DSM 1251)).